The chain runs to 59 residues: Large ribosomal subunit protein bL32 (59 aa).

Basic residues predominate over residues 1–16 (MAVPKRKTSPSKRGMR). Residues 1 to 59 (MAVPKRKTSPSKRGMRRSADALKAPTYVEDKNSGELRRPHHIDLKSGMYRGRQVLEAKE) form a disordered region. Residues 28 to 44 (VEDKNSGELRRPHHIDL) show a composition bias toward basic and acidic residues.

It belongs to the bacterial ribosomal protein bL32 family.

This Brucella anthropi (strain ATCC 49188 / DSM 6882 / CCUG 24695 / JCM 21032 / LMG 3331 / NBRC 15819 / NCTC 12168 / Alc 37) (Ochrobactrum anthropi) protein is Large ribosomal subunit protein bL32.